Reading from the N-terminus, the 383-residue chain is ATP phosphoribosyltransferase regulatory subunit (383 aa).

The protein belongs to the class-II aminoacyl-tRNA synthetase family. HisZ subfamily. In terms of assembly, heteromultimer composed of HisG and HisZ subunits.

Its subcellular location is the cytoplasm. It functions in the pathway amino-acid biosynthesis; L-histidine biosynthesis; L-histidine from 5-phospho-alpha-D-ribose 1-diphosphate: step 1/9. In terms of biological role, required for the first step of histidine biosynthesis. May allow the feedback regulation of ATP phosphoribosyltransferase activity by histidine. The protein is ATP phosphoribosyltransferase regulatory subunit of Neisseria meningitidis serogroup C / serotype 2a (strain ATCC 700532 / DSM 15464 / FAM18).